The chain runs to 252 residues: N-glycosylase/DNA lyase (252 aa).

8-oxoguanine contacts are provided by Gln32, Ser60, and Trp71. The helix-hairpin-helix stretch occupies residues 129–193 (KTYYSDMEKL…KDSRIEKYTL (65 aa)). Residue Lys153 is the Schiff-base intermediate with DNA of the active site. 8-oxoguanine is bound by residues Phe157 and Pro183. Asp185 is a catalytic residue. Residues Asp219 and Trp223 each coordinate 8-oxoguanine.

The protein belongs to the archaeal N-glycosylase/DNA lyase (AGOG) family.

The enzyme catalyses 2'-deoxyribonucleotide-(2'-deoxyribose 5'-phosphate)-2'-deoxyribonucleotide-DNA = a 3'-end 2'-deoxyribonucleotide-(2,3-dehydro-2,3-deoxyribose 5'-phosphate)-DNA + a 5'-end 5'-phospho-2'-deoxyribonucleoside-DNA + H(+). Its function is as follows. DNA repair enzyme that is part of the base excision repair (BER) pathway; protects from oxidative damage by removing the major product of DNA oxidation, 8-oxoguanine (GO), from single- and double-stranded DNA substrates. In Methanococcus maripaludis (strain DSM 14266 / JCM 13030 / NBRC 101832 / S2 / LL), this protein is N-glycosylase/DNA lyase.